We begin with the raw amino-acid sequence, 274 residues long: 4-deoxy-L-threo-5-hexosulose-uronate ketol-isomerase (274 aa).

4 residues coordinate Zn(2+): His-192, His-194, Glu-199, and His-241.

The protein belongs to the KduI family. It depends on Zn(2+) as a cofactor.

The enzyme catalyses 5-dehydro-4-deoxy-D-glucuronate = 3-deoxy-D-glycero-2,5-hexodiulosonate. It participates in glycan metabolism; pectin degradation; 2-dehydro-3-deoxy-D-gluconate from pectin: step 4/5. Functionally, catalyzes the isomerization of 5-dehydro-4-deoxy-D-glucuronate to 3-deoxy-D-glycero-2,5-hexodiulosonate. This chain is 4-deoxy-L-threo-5-hexosulose-uronate ketol-isomerase, found in Shigella boydii serotype 18 (strain CDC 3083-94 / BS512).